The sequence spans 988 residues: Mediator of RNA polymerase II transcription subunit 24 (988 aa).

Short sequence motifs (LXXLL motif) lie at residues 128–132 (LNWLL), 341–345 (LTPLL), 445–449 (LDLLL), 555–559 (LVALL), 786–790 (LPSLL), and 856–860 (LMRLL).

This sequence belongs to the Mediator complex subunit 24 family. In terms of assembly, component of the Mediator complex.

It localises to the nucleus. Functionally, component of the Mediator complex, a coactivator involved in the regulated transcription of nearly all RNA polymerase II-dependent genes. Mediator functions as a bridge to convey information from gene-specific regulatory proteins to the basal RNA polymerase II transcription machinery. Mediator is recruited to promoters by direct interactions with regulatory proteins and serves as a scaffold for the assembly of a functional preinitiation complex with RNA polymerase II and the general transcription factors. The sequence is that of Mediator of RNA polymerase II transcription subunit 24 (med24) from Xenopus laevis (African clawed frog).